A 384-amino-acid polypeptide reads, in one-letter code: Acetylgalactosaminyl-O-glycosyl-glycoprotein beta-1,3-N-acetylglucosaminyltransferase (384 aa).

The Cytoplasmic segment spans residues 1–12; that stretch reads MAFPCRRSLTAK. The chain crosses the membrane as a helical; Signal-anchor for type II membrane protein span at residues 13-31; that stretch reads TLACLLVGVSFLALQQWFL. The Lumenal segment spans residues 32 to 384; it reads QAPRSPREER…LSCDRGHRVS (353 aa). Residues 34 to 68 are disordered; sequence PRSPREERSPQEETPEGPTDAPAADEPPSELVPGP. 3 N-linked (GlcNAc...) asparagine glycosylation sites follow: Asn73, Asn77, and Asn196.

The protein belongs to the glycosyltransferase 31 family. As to expression, present in stomach and colon (at protein level). Restricted in the stomach, colon and small intestine, where core 3 structure is present.

Its subcellular location is the golgi apparatus membrane. It catalyses the reaction a 3-O-[N-acetyl-alpha-D-galactosaminyl]-L-threonyl-[protein] + UDP-N-acetyl-alpha-D-glucosamine = a 3-O-[N-acetyl-beta-D-glucosaminyl-(1-&gt;3)-N-acetyl-alpha-D-galactosaminyl]-L-threonyl-[protein] + UDP + H(+). It carries out the reaction a 3-O-[N-acetyl-alpha-D-galactosaminyl]-L-seryl-[protein] + UDP-N-acetyl-alpha-D-glucosamine = 3-O-[N-acetyl-beta-D-glucosaminyl-(1-&gt;3)-N-acetyl-alpha-D-galactosaminyl]-L-seryl-[protein] + UDP + H(+). The protein operates within protein modification; protein glycosylation. In terms of biological role, beta-1,3-N-acetylglucosaminyltransferase that synthesizes the core 3 structure of the O-glycan, an important precursor in the biosynthesis of mucin-type glycoproteins. Plays an important role in the synthesis of mucin-type O-glycans in digestive organs. This is Acetylgalactosaminyl-O-glycosyl-glycoprotein beta-1,3-N-acetylglucosaminyltransferase (B3GNT6) from Homo sapiens (Human).